Consider the following 373-residue polypeptide: Putative protein YfkA (373 aa).

Residues 26–256 (YGDMQLTNVE…DIRDENTWML (231 aa)) enclose the Radical SAM core domain. C42, C46, and C49 together coordinate [4Fe-4S] cluster.

Belongs to the radical SAM superfamily. It depends on [4Fe-4S] cluster as a cofactor.

This is Putative protein YfkA (yfkA) from Bacillus subtilis (strain 168).